The chain runs to 184 residues: Coordinator of PRMT5 and differentiation stimulator (184 aa).

Methionine 1 carries the post-translational modification N-acetylmethionine. The span at 1-14 (MDLQAAGAQAQGAA) shows a compositional bias: low complexity. The interval 1-136 (MDLQAAGAQA…PYDADDIQES (136 aa)) is disordered. Positions 42–56 (SSQERETEKAMDRLA) are enriched in basic and acidic residues. A phosphoserine mark is found at serine 66 and serine 75. Residues 78-89 (EGFAMDEEDSDG) are compositionally biased toward acidic residues.

As to quaternary structure, interacts with PRMT5. Interacts with histone H4; specifically interacts with the N-terminus of histone H4 but not with histone H3. Interacts with CBFB. Found in a complex with PRMT5, RUNX1 and CBFB.

It localises to the nucleus. In terms of biological role, histone-binding protein required for histone H4 methyltransferase activity of PRMT5. Specifically required for histone H4 'Arg-3' methylation mediated by PRMT5, but not histone H3 'Arg-8' methylation, suggesting that it modulates the substrate specificity of PRMT5. Specifically interacts with the N-terminus of histone H4 but not with histone H3, suggesting that it acts by promoting the association between histone H4 and PRMT5. Involved in CCNE1 promoter repression. Plays a role in muscle cell differentiation by modulating the recruitment of PRMT5 to the promoter of genes involved in the coordination between cell cycle exit and muscle differentiation. In Homo sapiens (Human), this protein is Coordinator of PRMT5 and differentiation stimulator (COPRS).